The sequence spans 223 residues: Ribosomal RNA small subunit methyltransferase G (223 aa).

S-adenosyl-L-methionine contacts are provided by residues Gly-83, Leu-88, 134–135, and Arg-152; that span reads AE.

It belongs to the methyltransferase superfamily. RNA methyltransferase RsmG family.

The protein resides in the cytoplasm. Its function is as follows. Specifically methylates the N7 position of guanine in position 518 of 16S rRNA. The sequence is that of Ribosomal RNA small subunit methyltransferase G from Corynebacterium diphtheriae (strain ATCC 700971 / NCTC 13129 / Biotype gravis).